Consider the following 950-residue polypeptide: Glycine dehydrogenase (decarboxylating) (950 aa).

Position 698 is an N6-(pyridoxal phosphate)lysine (lysine 698).

It belongs to the GcvP family. The glycine cleavage system is composed of four proteins: P, T, L and H. It depends on pyridoxal 5'-phosphate as a cofactor.

The catalysed reaction is N(6)-[(R)-lipoyl]-L-lysyl-[glycine-cleavage complex H protein] + glycine + H(+) = N(6)-[(R)-S(8)-aminomethyldihydrolipoyl]-L-lysyl-[glycine-cleavage complex H protein] + CO2. The glycine cleavage system catalyzes the degradation of glycine. The P protein binds the alpha-amino group of glycine through its pyridoxal phosphate cofactor; CO(2) is released and the remaining methylamine moiety is then transferred to the lipoamide cofactor of the H protein. The protein is Glycine dehydrogenase (decarboxylating) of Neisseria meningitidis serogroup C / serotype 2a (strain ATCC 700532 / DSM 15464 / FAM18).